The primary structure comprises 601 residues: Elongation factor 4 (601 aa).

Positions 7–189 (DTIRNFSIVA…AIVAKLPPPK (183 aa)) constitute a tr-type G domain. GTP is bound by residues 19 to 24 (DHGKST) and 136 to 139 (NKID).

It belongs to the TRAFAC class translation factor GTPase superfamily. Classic translation factor GTPase family. LepA subfamily.

It localises to the cell inner membrane. The enzyme catalyses GTP + H2O = GDP + phosphate + H(+). Functionally, required for accurate and efficient protein synthesis under certain stress conditions. May act as a fidelity factor of the translation reaction, by catalyzing a one-codon backward translocation of tRNAs on improperly translocated ribosomes. Back-translocation proceeds from a post-translocation (POST) complex to a pre-translocation (PRE) complex, thus giving elongation factor G a second chance to translocate the tRNAs correctly. Binds to ribosomes in a GTP-dependent manner. This Methylobacterium nodulans (strain LMG 21967 / CNCM I-2342 / ORS 2060) protein is Elongation factor 4.